A 755-amino-acid polypeptide reads, in one-letter code: Diamine oxidase [copper-containing] (755 aa).

Positions 1–24 are cleaved as a signal peptide; the sequence is MGRGTLALGWAGAALLLLQMLAAA. The N-linked (GlcNAc...) asparagine glycan is linked to asparagine 115. Cysteines 182 and 186 form a disulfide. The Proton acceptor role is filled by aspartate 376. A disulfide bond links cysteine 394 and cysteine 420. The active-site Schiff-base intermediate with substrate; via topaquinone is tyrosine 464. Tyrosine 464 is subject to 2',4',5'-topaquinone. Histidine 513 and histidine 515 together coordinate Cu(2+). 3 residues coordinate Ca(2+): aspartate 522, leucine 523, and aspartate 524. An N-linked (GlcNAc...) asparagine glycan is attached at asparagine 541. Glutamate 565, phenylalanine 656, asparagine 659, glutamate 661, aspartate 667, and leucine 668 together coordinate Ca(2+). Histidine 678 is a Cu(2+) binding site. The N-linked (GlcNAc...) asparagine glycan is linked to asparagine 749.

The protein belongs to the copper/topaquinone oxidase family. In terms of assembly, homodimer; disulfide-linked. The cofactor is Cu(2+). Ca(2+) serves as cofactor. Requires L-topaquinone as cofactor. Post-translationally, topaquinone (TPQ) is generated by copper-dependent autoxidation of a specific tyrosyl residue. In terms of processing, N-glycosylated; the glycans are primarily linear, di-, or tribranched fucosylated complex type.

It is found in the secreted. Its subcellular location is the extracellular space. It localises to the cell membrane. The enzyme catalyses histamine + O2 + H2O = imidazole-4-acetaldehyde + H2O2 + NH4(+). It catalyses the reaction N(tau)-methylhistamine + O2 + H2O = 1-methylimidazole-4-acetaldehyde + H2O2 + NH4(+). The catalysed reaction is putrescine + O2 + H2O = 4-aminobutanal + H2O2 + NH4(+). It carries out the reaction cadaverine + O2 + H2O = 5-aminopentanal + H2O2 + NH4(+). With respect to regulation, inhibited by amiloride and amiloride analogs. Catalyzes the oxidative deamination of primary amines to the corresponding aldehydes with the concomitant production of hydrogen peroxide and ammonia. Its preferred substrates in vitro are the diamines histamine and 1-methylhistamine and it could therefore play a role in allergic and immune responses. Has a broad specificity for diamines and can also act on cadaverine and putrescine, two products of amino acid catabolism. It could also act on polyamines, like spermidine and spermine though less efficiently, and regulate various biological processes. The sequence is that of Diamine oxidase [copper-containing] from Sus scrofa (Pig).